We begin with the raw amino-acid sequence, 379 residues long: Chaperone protein DnaJ (379 aa).

One can recognise a J domain in the interval 5 to 70 (DYYEVLGVEK…QKRAAYDQYG (66 aa)). Residues 133–211 (GKSVEIRVPT…CHGQGRVEKT (79 aa)) form a CR-type zinc finger. Zn(2+) is bound by residues Cys-146, Cys-149, Cys-163, Cys-166, Cys-185, Cys-188, Cys-199, and Cys-202. CXXCXGXG motif repeat units follow at residues 146–153 (CDTCDGSG), 163–170 (CTTCHGQG), 185–192 (CPTCGGKG), and 199–206 (CDVCHGQG).

The protein belongs to the DnaJ family. As to quaternary structure, homodimer. Zn(2+) is required as a cofactor.

It is found in the cytoplasm. Functionally, participates actively in the response to hyperosmotic and heat shock by preventing the aggregation of stress-denatured proteins and by disaggregating proteins, also in an autonomous, DnaK-independent fashion. Unfolded proteins bind initially to DnaJ; upon interaction with the DnaJ-bound protein, DnaK hydrolyzes its bound ATP, resulting in the formation of a stable complex. GrpE releases ADP from DnaK; ATP binding to DnaK triggers the release of the substrate protein, thus completing the reaction cycle. Several rounds of ATP-dependent interactions between DnaJ, DnaK and GrpE are required for fully efficient folding. Also involved, together with DnaK and GrpE, in the DNA replication of plasmids through activation of initiation proteins. The sequence is that of Chaperone protein DnaJ from Pseudoalteromonas atlantica (strain T6c / ATCC BAA-1087).